The following is a 151-amino-acid chain: Deoxyuridine 5'-triphosphate nucleotidohydrolase (151 aa).

Residues 70-72 (RSG), N83, 87-89 (LID), and M97 contribute to the substrate site.

Belongs to the dUTPase family. Mg(2+) is required as a cofactor.

It carries out the reaction dUTP + H2O = dUMP + diphosphate + H(+). It participates in pyrimidine metabolism; dUMP biosynthesis; dUMP from dCTP (dUTP route): step 2/2. Its function is as follows. This enzyme is involved in nucleotide metabolism: it produces dUMP, the immediate precursor of thymidine nucleotides and it decreases the intracellular concentration of dUTP so that uracil cannot be incorporated into DNA. The chain is Deoxyuridine 5'-triphosphate nucleotidohydrolase from Yersinia enterocolitica serotype O:8 / biotype 1B (strain NCTC 13174 / 8081).